The following is a 79-amino-acid chain: Small ribosomal subunit protein bS18B (79 aa).

It belongs to the bacterial ribosomal protein bS18 family. In terms of assembly, part of the 30S ribosomal subunit. Forms a tight heterodimer with protein bS6.

Its function is as follows. Binds as a heterodimer with protein bS6 to the central domain of the 16S rRNA, where it helps stabilize the platform of the 30S subunit. The chain is Small ribosomal subunit protein bS18B from Mycolicibacterium gilvum (strain PYR-GCK) (Mycobacterium gilvum (strain PYR-GCK)).